The following is a 325-amino-acid chain: MAASCILLHTGQKMPLIGLGTWKSDPGQVKAAIKYALSVGYRHIDCAAIYGNETEIGEALKENVGPGKLVPREELFVTSKLWNTKHHPEDVEPALRKTLADLQLEYLDLYLMHWPYAFERGDSPFPKNADGTIRYDSTHYKETWRALEALVAKGLVRALGLSNFNSRQIDDVLSVASVRPAVLQVECHPYLAQNELIAHCQARNLEVTAYSPLGSSDRAWRDPEEPVLLKEPVVLALAEKHGRSPAQILLRWQVQRKVSCIPKSVTPSRILENIQVFDFTFSPEEMKQLDALNKNLRFIVPMLTVDGKRVPRDAGHPLYPFNDPY.

Ala2 carries the N-acetylalanine modification. Phosphoserine is present on Ser4. Residues 11–20 (GQKMPLIGLG), Thr21, and Trp22 each bind NADP(+). Ser38 carries the phosphoserine modification. Asp45 serves as a coordination point for NADP(+). Tyr50 functions as the Proton donor in the catalytic mechanism. Position 127 is an N6-acetyllysine; alternate (Lys127). Position 127 is an N6-succinyllysine; alternate (Lys127). Ser162, Asn163, Ser211, Leu213, Ser215, Ser216, Lys263, Ser264, Val265, Thr266, Arg269, and Asn273 together coordinate NADP(+). Phosphoserine is present on Ser211.

This sequence belongs to the aldo/keto reductase family. As to quaternary structure, monomer.

It is found in the cytoplasm. Its subcellular location is the cytosol. The protein localises to the apical cell membrane. The catalysed reaction is a primary alcohol + NADP(+) = an aldehyde + NADPH + H(+). It carries out the reaction L-gulonate + NADP(+) = aldehydo-D-glucuronate + NADPH + H(+). It catalyses the reaction L-gulono-1,4-lactone + NADP(+) = D-glucurono-3,6-lactone + NADPH + H(+). The enzyme catalyses allyl alcohol + NADP(+) = acrolein + NADPH + H(+). The catalysed reaction is glycerol + NADP(+) = D-glyceraldehyde + NADPH + H(+). It carries out the reaction glycerol + NADP(+) = L-glyceraldehyde + NADPH + H(+). It catalyses the reaction hydroxyacetone + NADP(+) = methylglyoxal + NADPH + H(+). The enzyme catalyses 3-deoxyfructose + NADP(+) = 3-deoxyglucosone + NADPH + H(+). The catalysed reaction is (R)-mevalonate + NADP(+) = (R)-mevaldate + NADPH + H(+). It carries out the reaction pyridine 3-methanol + NADP(+) = pyridine-3-carbaldehyde + NADPH + H(+). It catalyses the reaction S-nitroso-CoA + NADPH + H(+) = sulfinamide-CoA + NADP(+). The enzyme catalyses S-nitrosoglutathione + NADPH + H(+) = S-(hydroxysulfenamide)glutathione + NADP(+). Catalyzes the NADPH-dependent reduction of a wide variety of carbonyl-containing compounds to their corresponding alcohols. Displays enzymatic activity towards endogenous metabolites such as aromatic and aliphatic aldehydes, ketones, monosaccharides and bile acids, with a preference for negatively charged substrates, such as glucuronate and succinic semialdehyde. Plays an important role in ascorbic acid biosynthesis by catalyzing the reduction of D-glucuronic acid and D-glucurono-gamma-lactone. Functions as a detoxifiying enzyme by reducing a range of toxic aldehydes. Reduces methylglyoxal and 3-deoxyglucosone, which are present at elevated levels under hyperglycemic conditions and are cytotoxic. Involved also in the detoxification of lipid-derived aldehydes like acrolein. Plays a role in the activation of procarcinogens, such as polycyclic aromatic hydrocarbon trans-dihydrodiols, and in the metabolism of various xenobiotics and drugs. Also acts as an inhibitor of protein S-nitrosylation by mediating degradation of S-nitroso-coenzyme A (S-nitroso-CoA), a cofactor required to S-nitrosylate proteins. S-nitroso-CoA reductase activity is involved in reprogramming intermediary metabolism in renal proximal tubules, notably by inhibiting protein S-nitrosylation of isoform 2 of PKM (PKM2). Also acts as a S-nitroso-glutathione reductase by catalyzing the NADPH-dependent reduction of S-nitrosoglutathione. Displays no reductase activity towards retinoids. This is Aldo-keto reductase family 1 member A1 from Bos taurus (Bovine).